A 606-amino-acid polypeptide reads, in one-letter code: Glucose methanol choline oxidoreductase atC (606 aa).

Residues methionine 1 to alanine 19 form the signal peptide. 8 N-linked (GlcNAc...) asparagine glycosylation sites follow: asparagine 43, asparagine 69, asparagine 87, asparagine 290, asparagine 368, asparagine 418, asparagine 421, and asparagine 552.

It belongs to the GMC oxidoreductase family.

It carries out the reaction terremutin + A = terreate + AH2. Its pathway is secondary metabolite biosynthesis. Glucose methanol choline oxidoreductase; part of the gene cluster that mediates the biosynthesis of terreic acid, a quinone epoxide inhibitor of Bruton's tyrosine kinase. The first step of the pathway is the synthesis of 6-methylsalicylic acid (6-MSA) by the 6-methylsalicylic acid synthase atX. In the biosynthesis of 6-MSA, atX utilizes one acetyl-CoA and three malonyl-CoAs as its substrates and catalyzes a series of programmed reactions including Claisen condensation, reduction, aldol cyclization, and the hydrolytic cleavage that yields 6-MSA. The 6-methylsalicylate 1-monooxygenase atA then catalyzes the decarboxylative hydroxylation of 6-MSA to 3-methylcatechol. The next step is the conversion of 3-methylcatechol to 3-methyl-1,2,4-benzenetriol by cytochrome P450 monooxygenase atE, which is enhanced by cytochrome P450 monooxygenase atG. Then, the epoxidase atD catalyzes the epoxidation and hydroxyl oxidation of 3-methyl-1,2,4-benzenetriol to terremutin. Lastly, GMC oxidoreductase atC oxidizes terremutin to terreic acid. This is Glucose methanol choline oxidoreductase atC from Aspergillus terreus (strain NIH 2624 / FGSC A1156).